Consider the following 402-residue polypeptide: CCA-adding enzyme (402 aa).

2 residues coordinate ATP: Gly32 and Arg35. Positions 32 and 35 each coordinate CTP. Mg(2+)-binding residues include Asp45 and Asp47. Residues Arg116, Asp159, Arg162, Arg165, and Arg168 each coordinate ATP. Positions 116, 159, 162, 165, and 168 each coordinate CTP.

It belongs to the tRNA nucleotidyltransferase/poly(A) polymerase family. Bacterial CCA-adding enzyme type 3 subfamily. In terms of assembly, homodimer. It depends on Mg(2+) as a cofactor.

It carries out the reaction a tRNA precursor + 2 CTP + ATP = a tRNA with a 3' CCA end + 3 diphosphate. The catalysed reaction is a tRNA with a 3' CCA end + 2 CTP + ATP = a tRNA with a 3' CCACCA end + 3 diphosphate. Functionally, catalyzes the addition and repair of the essential 3'-terminal CCA sequence in tRNAs without using a nucleic acid template. Adds these three nucleotides in the order of C, C, and A to the tRNA nucleotide-73, using CTP and ATP as substrates and producing inorganic pyrophosphate. tRNA 3'-terminal CCA addition is required both for tRNA processing and repair. Also involved in tRNA surveillance by mediating tandem CCA addition to generate a CCACCA at the 3' terminus of unstable tRNAs. While stable tRNAs receive only 3'-terminal CCA, unstable tRNAs are marked with CCACCA and rapidly degraded. The chain is CCA-adding enzyme from Streptococcus pyogenes serotype M1.